We begin with the raw amino-acid sequence, 485 residues long: Zinc finger protein 639 (485 aa).

Residues 1–14 (MNEYPKKRKRKTLH) are compositionally biased toward basic residues. Residues 1 to 20 (MNEYPKKRKRKTLHPSRYSD) are disordered. Serine 60 is subject to Phosphoserine. A Glycyl lysine isopeptide (Lys-Gly) (interchain with G-Cter in SUMO2) cross-link involves residue lysine 76. Position 88 is a phosphoserine (serine 88). Residues lysine 177, lysine 181, and lysine 226 each participate in a glycyl lysine isopeptide (Lys-Gly) (interchain with G-Cter in SUMO2) cross-link. 8 C2H2-type zinc fingers span residues 204 to 227 (YKCELCEFNSKYFSDLKQHMILKH), 233 to 255 (NVCRVCKESFSTNMLLIEHAKLH), 260 to 283 (YICKYCDYKTVIFENLSQHIADTH), 289 to 311 (YWCEQCDVQFSSSSELYLHFQEH), 374 to 397 (FVCQVCGFRSRLHTNVNRHVAIEH), 403 to 425 (HVCDDCGKGFSSMLEYCKHLNSH), 431 to 454 (YLCQYCEYSTGQIEDLKIHLDFKH), and 460 to 482 (HKCSDCLMRFGNERELISHLPVH). The interval 371–455 (KNFFVCQVCG…LKIHLDFKHS (85 aa)) is interaction with CTNNA2.

This sequence belongs to the krueppel C2H2-type zinc-finger protein family. As to quaternary structure, interacts with CTNNA2.

The protein localises to the nucleus. In terms of biological role, binds DNA and may function as a transcriptional repressor. The sequence is that of Zinc finger protein 639 (ZNF639) from Bos taurus (Bovine).